A 408-amino-acid polypeptide reads, in one-letter code: Protein EcsB (408 aa).

9 helical membrane passes run 30–50 (HLVI…SKWI), 53–73 (IPAH…VLTS), 111–131 (LFPL…VTPG), 134–154 (LVSY…NQVM), 180–200 (LVLY…YVIM), 284–304 (YLGI…YVSA), 308–328 (IAAV…LPLF), 351–371 (YFSL…VASA), and 374–394 (AGLT…FVVL).

It is found in the cell membrane. Its function is as follows. Presumed to form part of an ABC-transporter, it may form a transport channel. This Bacillus subtilis (strain 168) protein is Protein EcsB (ecsB).